The sequence spans 1031 residues: Formin-binding protein 4 (1031 aa).

3 disordered regions span residues 1-102 (MMGK…TTRP), 116-143 (AYADSDDDESDVSEKTAQSKEANGNQAT), and 166-205 (APVVASAPPPTPPRPEPKEAATPALSPTASNGSDTAQTPG). Ser-19 is subject to Phosphoserine. 2 stretches are compositionally biased toward low complexity: residues 41-73 (DSTAAATSQSAPAAATAAAATSPAVPASAAPED) and 83-92 (VVEVPNVVQN). 3 positions are modified to phosphoserine: Ser-120, Ser-125, and Ser-128. Residues 134-143 (SKEANGNQAT) are compositionally biased toward polar residues. The residue at position 176 (Thr-176) is a Phosphothreonine. The segment covering 190–203 (LSPTASNGSDTAQT) has biased composition (polar residues). In terms of domain architecture, WW 1 spans 218–252 (EIEMGDWQEVWDENTGCYYYWNTQTNEVTWELPQY). Lys-294 carries the post-translational modification N6-acetyllysine. Lys-305 is covalently cross-linked (Glycyl lysine isopeptide (Lys-Gly) (interchain with G-Cter in SUMO1)). Lys-339 participates in a covalent cross-link: Glycyl lysine isopeptide (Lys-Gly) (interchain with G-Cter in SUMO2). A Glycyl lysine isopeptide (Lys-Gly) (interchain with G-Cter in SUMO1); alternate cross-link involves residue Lys-352. Lys-352 participates in a covalent cross-link: Glycyl lysine isopeptide (Lys-Gly) (interchain with G-Cter in SUMO2); alternate. The disordered stretch occupies residues 355 to 518 (DPVSETKETS…KETEVEESSE (164 aa)). A compositionally biased stretch (acidic residues) spans 400–414 (ESEEEEEEEEQDTLE). Positions 418–430 (ALERKKAELRALE) are enriched in basic and acidic residues. Phosphoserine is present on residues Ser-435, Ser-440, Ser-443, Ser-446, and Ser-450. Over residues 436–450 (VSGSSPRSDISQPAS) the composition is skewed to polar residues. Residues 457–466 (IMSKRGKWKM) are compositionally biased toward basic residues. Residues 469–482 (RATSPESTSRSSSK) are compositionally biased toward low complexity. Residues Ser-472, Ser-507, and Ser-516 each carry the phosphoserine modification. The span at 499–518 (DSEKIDEISDKETEVEESSE) shows a compositional bias: basic and acidic residues. A Glycyl lysine isopeptide (Lys-Gly) (interchain with G-Cter in SUMO1); alternate cross-link involves residue Lys-527. Lys-527 participates in a covalent cross-link: Glycyl lysine isopeptide (Lys-Gly) (interchain with G-Cter in SUMO2); alternate. A WW 2 domain is found at 603–637 (NATPKGWSCHWDRDHRRYFYVNEQSGESQWEFPDG). Disordered stretches follow at residues 629–681 (ESQW…SLCK), 712–813 (PLPL…VQRS), and 900–994 (PAQA…RIEE). Residues 643 to 663 (SQTKEVRDESLPKLTVKDKTC) show a composition bias toward basic and acidic residues. Polar residues predominate over residues 664–677 (TDPNSTESSENPTG). Residues 712 to 741 (PLPLEMPPPPPPPPESPPPPPPPPPPPPPL) are compositionally biased toward pro residues. A compositionally biased stretch (acidic residues) spans 742–757 (EDGEIQEVEMEDEGSE). Over residues 771 to 794 (KPSTQTTAVTSQSLVDSTASSPPS) the composition is skewed to polar residues. The segment covering 913–939 (VEPPPPPPPPPTPTPPPPPPAPKVPPP) has biased composition (pro residues). Over residues 943–955 (RKGKKDKAKKSKT) the composition is skewed to basic residues. Positions 971–984 (LDEEDNSSSSEEDR) are enriched in acidic residues. Phosphoserine occurs at positions 977, 978, and 979. A compositionally biased stretch (basic and acidic residues) spans 985-994 (ESTAQKRIEE).

Binds FMN1. Interacts with the Arg/Gly-rich-flanked Pro-rich regions of KHDRBS1/SAM68. Arginine methylation in these regions has no effect on this binding. Ubiquitous. Highest levels in spleen and thymus.

This is Formin-binding protein 4 (Fnbp4) from Mus musculus (Mouse).